The primary structure comprises 128 residues: MAGKNQSQKKKKSTAPMGNGQPVNQLCQLLGAMIKSQRQQPRGGQAKKKKPEKPHFPLAAEDDIRHHLTQTERSLCLQSIQTAFNQGAGTASLSSSGKVSFQVEFMLPVAHTVRLIRVTSTSASQGAS.

A disordered region spans residues 1–60 (MAGKNQSQKKKKSTAPMGNGQPVNQLCQLLGAMIKSQRQQPRGGQAKKKKPEKPHFPLAA).

The protein belongs to the arteriviridae nucleocapsid family. In terms of assembly, homooligomer. Interacts with host PABPC1 (via C-terminus). Interacts with host HIC; this interaction may regulate the expression of different cellular genes.

Its subcellular location is the virion. It localises to the host cytoplasm. It is found in the host nucleus. Its function is as follows. Multifunctional protein which associates with itself through both covalent and non-covalent interactions to provide the basis for viral assembly. May play a role in the regulation of cellular gene expression during infection by interacting with host HIC. Plays a role in the inhibition of the dsRNA-mediated IFN induction pathway by inhibiting host IRF3 phosphorylation and nuclear translocation. The sequence is that of Nucleoprotein (N) from Sus scrofa (Pig).